Reading from the N-terminus, the 571-residue chain is Vesicle-associated protein 1-4 (571 aa).

The MSP 1 domain maps to 1-126 (MSTDELLTFD…EETIFKIIYV (126 aa)). The tract at residues 132–154 (QSPVQEGLEDGSSPSASVSDKGN) is disordered. Over residues 143–153 (SSPSASVSDKG) the composition is skewed to polar residues. Residues 176-296 (LLIIDPVDVQ…EETRLKVMYV (121 aa)) enclose the MSP 2 domain. The segment at 297 to 322 (TPPQPPSPVQEGTEEGSSPRASVSDN) is disordered. Positions 311–322 (EGSSPRASVSDN) are enriched in polar residues. The region spanning 356-493 (PQYQVFINFR…KWKEALSSVF (138 aa)) is the TIR domain. Glu430 is a catalytic residue.

Belongs to the VAMP-associated protein (VAP) (TC 9.B.17) family.

It catalyses the reaction NAD(+) + H2O = ADP-D-ribose + nicotinamide + H(+). In terms of biological role, may play a role in vesicle trafficking. This Arabidopsis thaliana (Mouse-ear cress) protein is Vesicle-associated protein 1-4 (PVA14).